The sequence spans 311 residues: Malate dehydrogenase (311 aa).

NAD(+)-binding positions include 7 to 12 (GAGNVG) and aspartate 32. Residues arginine 82 and arginine 88 each coordinate substrate. NAD(+) contacts are provided by residues asparagine 95 and 118-120 (VSN). 2 residues coordinate substrate: asparagine 120 and arginine 151. Catalysis depends on histidine 175, which acts as the Proton acceptor.

It belongs to the LDH/MDH superfamily. MDH type 3 family. In terms of assembly, homotetramer.

The catalysed reaction is (S)-malate + NAD(+) = oxaloacetate + NADH + H(+). With respect to regulation, strongly inhibited by iodoacetic acid and CuCl(2). Completely inhibited by N-ethylmaleimide and HgCl(2). Its function is as follows. Catalyzes the reversible oxidation of malate to oxaloacetate. Can use both NAD and NADP for malate oxidation, but NADPH cannot be used for oxaloacetate reduction. In Flavobacterium frigidimaris, this protein is Malate dehydrogenase.